A 20-amino-acid polypeptide reads, in one-letter code: Putative phosphoglycerate kinase (20 aa).

It belongs to the phosphoglycerate kinase family. As to quaternary structure, monomer.

The protein localises to the cytoplasm. It carries out the reaction (2R)-3-phosphoglycerate + ATP = (2R)-3-phospho-glyceroyl phosphate + ADP. Its pathway is carbohydrate degradation; glycolysis; pyruvate from D-glyceraldehyde 3-phosphate: step 2/5. This is Putative phosphoglycerate kinase (pgk) from Clostridium pasteurianum.